Consider the following 234-residue polypeptide: Heme-copper oxidase subunit 2 (234 aa).

Transmembrane regions (helical) follow at residues Leu-13 to Ile-33 and Leu-72 to Leu-92. Residues His-151, Cys-188, Cys-192, and His-196 each coordinate Cu cation.

The protein belongs to the cytochrome c oxidase subunit 2 family.

It is found in the cell membrane. This Aeropyrum pernix (strain ATCC 700893 / DSM 11879 / JCM 9820 / NBRC 100138 / K1) protein is Heme-copper oxidase subunit 2 (aoxA).